Consider the following 214-residue polypeptide: 3-isopropylmalate dehydratase small subunit (214 aa).

This sequence belongs to the LeuD family. LeuD type 1 subfamily. In terms of assembly, heterodimer of LeuC and LeuD.

It catalyses the reaction (2R,3S)-3-isopropylmalate = (2S)-2-isopropylmalate. The protein operates within amino-acid biosynthesis; L-leucine biosynthesis; L-leucine from 3-methyl-2-oxobutanoate: step 2/4. Its function is as follows. Catalyzes the isomerization between 2-isopropylmalate and 3-isopropylmalate, via the formation of 2-isopropylmaleate. The chain is 3-isopropylmalate dehydratase small subunit from Pseudomonas entomophila (strain L48).